The following is a 190-amino-acid chain: Imidazoleglycerol-phosphate dehydratase (190 aa).

It belongs to the imidazoleglycerol-phosphate dehydratase family.

Its subcellular location is the cytoplasm. The catalysed reaction is D-erythro-1-(imidazol-4-yl)glycerol 3-phosphate = 3-(imidazol-4-yl)-2-oxopropyl phosphate + H2O. The protein operates within amino-acid biosynthesis; L-histidine biosynthesis; L-histidine from 5-phospho-alpha-D-ribose 1-diphosphate: step 6/9. In Methanococcus vannielii (strain ATCC 35089 / DSM 1224 / JCM 13029 / OCM 148 / SB), this protein is Imidazoleglycerol-phosphate dehydratase.